The sequence spans 174 residues: uncharacterized protein (174 aa).

This is an uncharacterized protein from Methanocaldococcus jannaschii (strain ATCC 43067 / DSM 2661 / JAL-1 / JCM 10045 / NBRC 100440) (Methanococcus jannaschii).